A 325-amino-acid chain; its full sequence is Phosphatidylserine decarboxylase proenzyme (325 aa).

Residues Asp90, His147, and Ser253 each act as charge relay system; for autoendoproteolytic cleavage activity in the active site. The Schiff-base intermediate with substrate; via pyruvic acid; for decarboxylase activity role is filled by Ser253. At Ser253 the chain carries Pyruvic acid (Ser); by autocatalysis. The segment at 281–325 (MASKMSSQKAITPEQTTETPVQASNEFDDNAGETKKDTPSEGADS) is disordered. Residues 284–305 (KMSSQKAITPEQTTETPVQASN) show a composition bias toward polar residues.

It belongs to the phosphatidylserine decarboxylase family. PSD-B subfamily. Prokaryotic type I sub-subfamily. As to quaternary structure, heterodimer of a large membrane-associated beta subunit and a small pyruvoyl-containing alpha subunit. Requires pyruvate as cofactor. In terms of processing, is synthesized initially as an inactive proenzyme. Formation of the active enzyme involves a self-maturation process in which the active site pyruvoyl group is generated from an internal serine residue via an autocatalytic post-translational modification. Two non-identical subunits are generated from the proenzyme in this reaction, and the pyruvate is formed at the N-terminus of the alpha chain, which is derived from the carboxyl end of the proenzyme. The autoendoproteolytic cleavage occurs by a canonical serine protease mechanism, in which the side chain hydroxyl group of the serine supplies its oxygen atom to form the C-terminus of the beta chain, while the remainder of the serine residue undergoes an oxidative deamination to produce ammonia and the pyruvoyl prosthetic group on the alpha chain. During this reaction, the Ser that is part of the protease active site of the proenzyme becomes the pyruvoyl prosthetic group, which constitutes an essential element of the active site of the mature decarboxylase.

The protein localises to the cell membrane. It carries out the reaction a 1,2-diacyl-sn-glycero-3-phospho-L-serine + H(+) = a 1,2-diacyl-sn-glycero-3-phosphoethanolamine + CO2. Its pathway is phospholipid metabolism; phosphatidylethanolamine biosynthesis; phosphatidylethanolamine from CDP-diacylglycerol: step 2/2. Functionally, catalyzes the formation of phosphatidylethanolamine (PtdEtn) from phosphatidylserine (PtdSer). This Alteromonas mediterranea (strain DSM 17117 / CIP 110805 / LMG 28347 / Deep ecotype) protein is Phosphatidylserine decarboxylase proenzyme.